Reading from the N-terminus, the 97-residue chain is Lipolysis-activating peptide 1-alpha chain (97 aa).

An N-terminal signal peptide occupies residues 1-21 (MNITLFCSVFILISLAGLSVS). An LCN-type CS-alpha/beta domain is found at 25–88 (PGNYPMSLYG…FWAAHKNHCK (64 aa)). Cystine bridges form between C39–C62, C48–C67, and C52–C69.

The protein belongs to the long (3 C-C) scorpion toxin superfamily. Monomer (edited version) and heterodimer (non-edited version) of this alpha chain and a beta chain (AC D9U2A2). As to expression, expressed by the venom gland.

It is found in the secreted. Functionally, the heterodimer non-edited LVP1 induces lipolysis in rat adipocytes. Induction of lipolysis by LVP1 appears to be mediated through the beta-2 adrenergic receptor pathway (ADRB2). In terms of biological role, the edited BmKBTx-like, similar to beta-toxins, may modulate voltage-gated sodium channels (Nav) and may block voltage-gated potassium channels (Kv). In Lychas mucronatus (Chinese swimming scorpion), this protein is Lipolysis-activating peptide 1-alpha chain.